The chain runs to 123 residues: Galectin-2 (123 aa).

The region spanning 4-123 (KVEIMNMDMK…LRYLSVQGGF (120 aa)) is the Galectin domain. 65–71 (WGKEQRD) serves as a coordination point for a beta-D-galactoside.

As to quaternary structure, homodimer.

Functionally, this protein binds beta-galactoside. Its physiological function is not yet known. This chain is Galectin-2 (LGALS2), found in Sus scrofa (Pig).